Consider the following 97-residue polypeptide: Large ribosomal subunit protein bL27 (97 aa).

Residues 1–12 (MLNLNLANLQFM) constitute a propeptide that is removed on maturation. Residues 15–37 (KKGGGSTSNGRDSQAKRLGAKAA) form a disordered region.

Belongs to the bacterial ribosomal protein bL27 family. In terms of processing, the N-terminus is cleaved by ribosomal processing cysteine protease Prp.

The polypeptide is Large ribosomal subunit protein bL27 (Streptococcus suis (strain 98HAH33)).